The sequence spans 178 residues: MHSSALLCYLVFLAGVGASRDRGTQSENSCTHFPTSLPHMLHELRAAFSRVKTFFQMKDQLDNMLLNGSLLEDFKGYLGCQALSEMIQFYLEEVMPQAENHGPDIKEHVNSLGEKLKTLRVRLRRCHRFLPCENKSKAVEQVKSAFSKLQEKGVYKAMSEFDIFINYIEAYMTTKMKN.

The N-terminal stretch at 1 to 18 is a signal peptide; that stretch reads MHSSALLCYLVFLAGVGA. 2 disulfide bridges follow: Cys30-Cys126 and Cys80-Cys132. An N-linked (GlcNAc...) asparagine glycan is attached at Asn67. Asn134 is a glycosylation site (N-linked (GlcNAc...) asparagine).

This sequence belongs to the IL-10 family. Homodimer. Interacts with IL10RA and IL10RB.

The protein resides in the secreted. Functionally, major immune regulatory cytokine that acts on many cells of the immune system where it has profound anti-inflammatory functions, limiting excessive tissue disruption caused by inflammation. Mechanistically, IL10 binds to its heterotetrameric receptor comprising IL10RA and IL10RB leading to JAK1 and STAT2-mediated phosphorylation of STAT3. In turn, STAT3 translocates to the nucleus where it drives expression of anti-inflammatory mediators. Targets antigen-presenting cells (APCs) such as macrophages and monocytes and inhibits their release of pro-inflammatory cytokines including granulocyte-macrophage colony-stimulating factor /GM-CSF, granulocyte colony-stimulating factor/G-CSF, IL-1 alpha, IL-1 beta, IL-6, IL-8 and TNF-alpha. Also interferes with antigen presentation by reducing the expression of MHC-class II and co-stimulatory molecules, thereby inhibiting their ability to induce T cell activation. In addition, controls the inflammatory response of macrophages by reprogramming essential metabolic pathways including mTOR signaling. In Equus caballus (Horse), this protein is Interleukin-10 (IL10).